The primary structure comprises 359 residues: 3-dehydroquinate synthase (359 aa).

Residues 71–76, 105–109, 129–130, Lys-142, Lys-151, and 169–172 each bind NAD(+); these read DGEAHK, GVIGD, TT, and TLHT. 3 residues coordinate Zn(2+): Glu-184, His-247, and His-264.

Belongs to the sugar phosphate cyclases superfamily. Dehydroquinate synthase family. Requires NAD(+) as cofactor. It depends on Co(2+) as a cofactor. Zn(2+) serves as cofactor.

It localises to the cytoplasm. The catalysed reaction is 7-phospho-2-dehydro-3-deoxy-D-arabino-heptonate = 3-dehydroquinate + phosphate. It functions in the pathway metabolic intermediate biosynthesis; chorismate biosynthesis; chorismate from D-erythrose 4-phosphate and phosphoenolpyruvate: step 2/7. Functionally, catalyzes the conversion of 3-deoxy-D-arabino-heptulosonate 7-phosphate (DAHP) to dehydroquinate (DHQ). This chain is 3-dehydroquinate synthase, found in Neisseria meningitidis serogroup B (strain ATCC BAA-335 / MC58).